The primary structure comprises 38 residues: Photosystem II reaction center protein L (38 aa).

Residues 17–37 form a helical membrane-spanning segment; sequence SLFWGLLLIFVLAVLFSSYFF.

The protein belongs to the PsbL family. PSII is composed of 1 copy each of membrane proteins PsbA, PsbB, PsbC, PsbD, PsbE, PsbF, PsbH, PsbI, PsbJ, PsbK, PsbL, PsbM, PsbT, PsbX, PsbY, PsbZ, Psb30/Ycf12, at least 3 peripheral proteins of the oxygen-evolving complex and a large number of cofactors. It forms dimeric complexes.

It localises to the plastid. Its subcellular location is the chloroplast thylakoid membrane. Its function is as follows. One of the components of the core complex of photosystem II (PSII). PSII is a light-driven water:plastoquinone oxidoreductase that uses light energy to abstract electrons from H(2)O, generating O(2) and a proton gradient subsequently used for ATP formation. It consists of a core antenna complex that captures photons, and an electron transfer chain that converts photonic excitation into a charge separation. This subunit is found at the monomer-monomer interface and is required for correct PSII assembly and/or dimerization. This is Photosystem II reaction center protein L from Gracilaria tenuistipitata var. liui (Red alga).